The chain runs to 357 residues: Protein AAR2 homolog (357 aa).

The protein belongs to the AAR2 family.

The protein is Protein AAR2 homolog of Caenorhabditis elegans.